The sequence spans 692 residues: Elongation factor G (692 aa).

Positions 8 to 282 (ENTRNIGIMA…AVIDYLPSPL (275 aa)) constitute a tr-type G domain. Residues 17–24 (AHIDAGKT), 81–85 (DTPGH), and 135–138 (NKMD) contribute to the GTP site.

It belongs to the TRAFAC class translation factor GTPase superfamily. Classic translation factor GTPase family. EF-G/EF-2 subfamily.

The protein localises to the cytoplasm. Functionally, catalyzes the GTP-dependent ribosomal translocation step during translation elongation. During this step, the ribosome changes from the pre-translocational (PRE) to the post-translocational (POST) state as the newly formed A-site-bound peptidyl-tRNA and P-site-bound deacylated tRNA move to the P and E sites, respectively. Catalyzes the coordinated movement of the two tRNA molecules, the mRNA and conformational changes in the ribosome. The sequence is that of Elongation factor G from Bacillus cereus (strain AH820).